A 578-amino-acid polypeptide reads, in one-letter code: 2-succinyl-5-enolpyruvyl-6-hydroxy-3-cyclohexene-1-carboxylate synthase (578 aa).

The protein belongs to the TPP enzyme family. MenD subfamily. Homodimer. It depends on Mg(2+) as a cofactor. The cofactor is Mn(2+). Requires thiamine diphosphate as cofactor.

The catalysed reaction is isochorismate + 2-oxoglutarate + H(+) = 5-enolpyruvoyl-6-hydroxy-2-succinyl-cyclohex-3-ene-1-carboxylate + CO2. Its pathway is quinol/quinone metabolism; 1,4-dihydroxy-2-naphthoate biosynthesis; 1,4-dihydroxy-2-naphthoate from chorismate: step 2/7. The protein operates within quinol/quinone metabolism; menaquinone biosynthesis. Functionally, catalyzes the thiamine diphosphate-dependent decarboxylation of 2-oxoglutarate and the subsequent addition of the resulting succinic semialdehyde-thiamine pyrophosphate anion to isochorismate to yield 2-succinyl-5-enolpyruvyl-6-hydroxy-3-cyclohexene-1-carboxylate (SEPHCHC). The polypeptide is 2-succinyl-5-enolpyruvyl-6-hydroxy-3-cyclohexene-1-carboxylate synthase (Bacillus velezensis (strain DSM 23117 / BGSC 10A6 / LMG 26770 / FZB42) (Bacillus amyloliquefaciens subsp. plantarum)).